Consider the following 829-residue polypeptide: Outer dense fiber protein 2 (829 aa).

2 positions are modified to phosphoserine: Ser-73 and Ser-74. Thr-92 carries the post-translational modification Phosphothreonine. The residue at position 95 (Ser-95) is a Phosphoserine; by TSSK4. Residues Ser-106 and Ser-109 each carry the phosphoserine modification. A Phosphothreonine modification is found at Thr-110. Residues Ser-115 and Ser-129 each carry the phosphoserine modification. Lys-138 participates in a covalent cross-link: Glycyl lysine isopeptide (Lys-Gly) (interchain with G-Cter in SUMO2). The residue at position 139 (Ser-139) is a Phosphoserine. Positions 144 to 217 (QKGERQMAKR…MSKLVEAEMD (74 aa)) form a coiled coil. Thr-231 is modified (phosphothreonine). 2 coiled-coil regions span residues 245-423 (DINT…AEQL) and 461-798 (EIIV…NYVQ). Residue Ser-261 is modified to Phosphoserine. Residues 392-413 (KQKGDRDKESLKKAIRAQKERA) are disordered. Residues 537–701 (KNYEGMIDNY…EAIHQSQLRL (165 aa)) form an interaction with BBOF1 region. Phosphoserine is present on Ser-632.

This sequence belongs to the ODF2 family. In terms of assembly, self-associates. Associates with microtubules and forms a fibrillar structure partially linked to the microtubule network. Interacts via its C-terminus with PLK1. Interacts with ODF1. Interacts with MARK4; the interaction is required for localization of ODF2 to centrioles. Interacts with TSSK4. Interacts with AKNA. Interacts with QRICH2. Interacts with CFAP58. Interacts with BBOF1. Interacts with CCDC38. Interacts with CCDC42. Tyrosine phosphorylated. Phosphorylated by TSSK4 on Ser-95. In terms of tissue distribution, testis-specific (at protein level). Highly expressed in cytoplasm of step 2 round spermatids. Detected in the middle piece and extends to about half the principal piece of the sperm tails.

It localises to the cytoplasm. Its subcellular location is the cytoskeleton. The protein resides in the microtubule organizing center. The protein localises to the centrosome. It is found in the cell projection. It localises to the cilium. Its subcellular location is the centriole. The protein resides in the spindle pole. The protein localises to the flagellum. Functionally, seems to be a major component of sperm tail outer dense fibers (ODF). ODFs are filamentous structures located on the outside of the axoneme in the midpiece and principal piece of the mammalian sperm tail and may help to maintain the passive elastic structures and elastic recoil of the sperm tail. May have a modulating influence on sperm motility. Functions as a general scaffold protein that is specifically localized at the distal/subdistal appendages of mother centrioles. Component of the centrosome matrix required for the localization of PLK1 and NIN to the centrosomes. Required for the formation and/or maintenance of normal CETN1 assembly. This chain is Outer dense fiber protein 2 (ODF2), found in Homo sapiens (Human).